Reading from the N-terminus, the 396-residue chain is S-adenosylmethionine synthase (396 aa).

H15 provides a ligand contact to ATP. Position 17 (D17) interacts with Mg(2+). E43 is a K(+) binding site. Residues E56 and Q99 each coordinate L-methionine. The flexible loop stretch occupies residues 99-109; the sequence is QSADIALGVDR. Residues 175–177, 241–242, D250, 256–257, A273, and K277 contribute to the ATP site; these read DGK, RF, and RK. D250 contributes to the L-methionine binding site. L-methionine is bound at residue K281.

The protein belongs to the AdoMet synthase family. In terms of assembly, homotetramer; dimer of dimers. The cofactor is Mg(2+). It depends on K(+) as a cofactor.

Its subcellular location is the cytoplasm. It carries out the reaction L-methionine + ATP + H2O = S-adenosyl-L-methionine + phosphate + diphosphate. It participates in amino-acid biosynthesis; S-adenosyl-L-methionine biosynthesis; S-adenosyl-L-methionine from L-methionine: step 1/1. Catalyzes the formation of S-adenosylmethionine (AdoMet) from methionine and ATP. The overall synthetic reaction is composed of two sequential steps, AdoMet formation and the subsequent tripolyphosphate hydrolysis which occurs prior to release of AdoMet from the enzyme. The sequence is that of S-adenosylmethionine synthase from Desulfitobacterium hafniense (strain DSM 10664 / DCB-2).